We begin with the raw amino-acid sequence, 142 residues long: Large ribosomal subunit protein uL11 (142 aa).

The protein belongs to the universal ribosomal protein uL11 family. Part of the ribosomal stalk of the 50S ribosomal subunit. Interacts with L10 and the large rRNA to form the base of the stalk. L10 forms an elongated spine to which L12 dimers bind in a sequential fashion forming a multimeric L10(L12)X complex. In terms of processing, one or more lysine residues are methylated.

In terms of biological role, forms part of the ribosomal stalk which helps the ribosome interact with GTP-bound translation factors. The sequence is that of Large ribosomal subunit protein uL11 from Xanthomonas campestris pv. campestris (strain 8004).